A 205-amino-acid polypeptide reads, in one-letter code: MLTLALPKGRLAEESIDLMISKGWLSSKPDPNSKELIYNDPKGKIRILLVRSQDVATYVEQCAADAGISGWDVLKEGGYDLATPLDLKIGKCRLSLAAPNGFTLEAHHRKIRVATKYPNLAREFFFLKGLSCEIFKLYGSIELAPLVGLSDCIVDLVSTGGTLKANGLKELDIILESSARLVFNRSSLYGKRKEAVEFMDSLSKI.

The protein belongs to the ATP phosphoribosyltransferase family. Short subfamily. Heteromultimer composed of HisG and HisZ subunits.

Its subcellular location is the cytoplasm. The enzyme catalyses 1-(5-phospho-beta-D-ribosyl)-ATP + diphosphate = 5-phospho-alpha-D-ribose 1-diphosphate + ATP. Its pathway is amino-acid biosynthesis; L-histidine biosynthesis; L-histidine from 5-phospho-alpha-D-ribose 1-diphosphate: step 1/9. Its function is as follows. Catalyzes the condensation of ATP and 5-phosphoribose 1-diphosphate to form N'-(5'-phosphoribosyl)-ATP (PR-ATP). Has a crucial role in the pathway because the rate of histidine biosynthesis seems to be controlled primarily by regulation of HisG enzymatic activity. This chain is ATP phosphoribosyltransferase, found in Leptospira interrogans serogroup Icterohaemorrhagiae serovar Lai (strain 56601).